Here is a 284-residue protein sequence, read N- to C-terminus: ADP-polyphosphate phosphotransferase 3 (284 aa).

Composition is skewed to basic and acidic residues over residues Met1–Ala22 and Asp260–Arg277. 2 disordered regions span residues Met1–Gly32 and Asp260–Phe284.

This sequence belongs to the polyphosphate kinase 2 (PPK2) family. Class I subfamily.

It catalyses the reaction [phosphate](n) + ATP = [phosphate](n+1) + ADP. The catalysed reaction is [phosphate](n) + GTP = [phosphate](n+1) + GDP. Its function is as follows. Uses inorganic polyphosphate (polyP) as a donor to convert ADP to ATP. Can also convert GDP to GTP, with lower efficiency. In Rhizobium meliloti (strain 1021) (Ensifer meliloti), this protein is ADP-polyphosphate phosphotransferase 3.